Here is a 470-residue protein sequence, read N- to C-terminus: Methylenetetrahydrofolate--tRNA-(uracil-5-)-methyltransferase TrmFO (470 aa).

Residue 10–15 (GAGLAG) participates in FAD binding.

The protein belongs to the MnmG family. TrmFO subfamily. Requires FAD as cofactor.

Its subcellular location is the cytoplasm. The enzyme catalyses uridine(54) in tRNA + (6R)-5,10-methylene-5,6,7,8-tetrahydrofolate + NADH + H(+) = 5-methyluridine(54) in tRNA + (6S)-5,6,7,8-tetrahydrofolate + NAD(+). It carries out the reaction uridine(54) in tRNA + (6R)-5,10-methylene-5,6,7,8-tetrahydrofolate + NADPH + H(+) = 5-methyluridine(54) in tRNA + (6S)-5,6,7,8-tetrahydrofolate + NADP(+). Functionally, catalyzes the folate-dependent formation of 5-methyl-uridine at position 54 (M-5-U54) in all tRNAs. The protein is Methylenetetrahydrofolate--tRNA-(uracil-5-)-methyltransferase TrmFO of Prochlorococcus marinus (strain MIT 9215).